The chain runs to 77 residues: Pi-stichotoxin-Hmg5a (77 aa).

Positions 1 to 21 (MDYQRLLFLFAVAMVITTTVA) are cleaved as a signal peptide. A propeptide spanning residues 22–34 (LPQDTALMDGQLQ) is cleaved from the precursor. 3 disulfides stabilise this stretch: cysteine 40/cysteine 73, cysteine 42/cysteine 66, and cysteine 56/cysteine 74.

The protein belongs to the sea anemone type 3 (BDS) potassium channel toxin family.

The protein localises to the secreted. The protein resides in the nematocyst. Functionally, toxin that inhibits rat ASIC3 channels (IC(50)=13.8 uM). Also able to bind T.californica muscle-type nicotinic acetylcholine receptors (nAChR), and human alpha-7/CHRNA7 nicotinic acetylcholine receptors. This Heteractis magnifica (Magnificent sea anemone) protein is Pi-stichotoxin-Hmg5a.